We begin with the raw amino-acid sequence, 230 residues long: Ureidoacrylate amidohydrolase RutB (230 aa).

Residue Asp24 is the Proton acceptor of the active site. The active site involves Lys133. Cys166 functions as the Nucleophile in the catalytic mechanism.

Belongs to the isochorismatase family. RutB subfamily.

The enzyme catalyses (Z)-3-ureidoacrylate + H2O + H(+) = (Z)-3-aminoacrylate + NH4(+) + CO2. It carries out the reaction (Z)-3-ureidoacrylate + H2O = (Z)-3-aminoacrylate + carbamate + H(+). The catalysed reaction is (Z)-2-methylureidoacrylate + H2O + H(+) = (Z)-2-methylaminoacrylate + NH4(+) + CO2. Functionally, hydrolyzes ureidoacrylate to form aminoacrylate and carbamate. The carbamate hydrolyzes spontaneously, thereby releasing one of the nitrogen atoms of the pyrimidine ring as ammonia and one of its carbon atoms as CO2. This Escherichia coli O150:H5 (strain SE15) protein is Ureidoacrylate amidohydrolase RutB.